We begin with the raw amino-acid sequence, 1037 residues long: PH and SEC7 domain-containing protein 3 (1037 aa).

The disordered stretch occupies residues 37–70; it reads EEKTPDSSDHGGSTLLPPTVTNEFPEYGTMEEGG. Serine 76 bears the Phosphoserine mark. Disordered stretches follow at residues 169 to 189, 236 to 255, 262 to 284, 304 to 335, and 353 to 375; these read TASH…GKSP, RVPE…HNPV, REQR…SMGR, EAES…ACGV, and APSE…ESGE. Residues 237–251 show a composition bias toward low complexity; that stretch reads VPESACPVSSSSAGS. Over residues 262–277 the composition is skewed to basic and acidic residues; it reads REQRSDLGREHPRGYD. Positions 515–723 constitute an SEC7 domain; the sequence is NSVYTRGPQE…KALYNSIKNE (209 aa). Residues 730–747 show a composition bias toward basic and acidic residues; sequence DDEEKKKSPSEGTDEKAN. The segment at 730–762 is disordered; the sequence is DDEEKKKSPSEGTDEKANGTHPKTISRIGSTTN. A compositionally biased stretch (polar residues) spans 750 to 762; sequence HPKTISRIGSTTN. Serine 759 is modified (phosphoserine). The region spanning 774 to 887 is the PH domain; the sequence is AVYKSGFLAR…WINKINCVAA (114 aa). The stretch at 911–941 forms a coiled coil; sequence ATTTKLSQEEQLKSHESKLKQITTELAEHRS. The segment at 984-1037 is disordered; that stretch reads LLTTDGNEPVGLKKSHSSPSLNPDASPVTAKVKRNVSERKDHRPETPGIKQKVT. Residues serine 998, serine 1000, serine 1001, serine 1003, and serine 1009 each carry the phosphoserine modification. Over residues 1018–1028 the composition is skewed to basic and acidic residues; it reads NVSERKDHRPE.

In terms of tissue distribution, ubiquitously expressed, with highest levels in liver. Present in brain, with highest levels in olfactory bulb, cortex, hippocampal pyramidal cell layer and cerebellar granule cell layer (at protein level).

Its subcellular location is the cell membrane. It localises to the cell projection. It is found in the ruffle membrane. The protein localises to the postsynaptic density. Its function is as follows. Guanine nucleotide exchange factor for ARF6. The protein is PH and SEC7 domain-containing protein 3 (Psd3) of Mus musculus (Mouse).